The chain runs to 224 residues: Charged multivesicular body protein 3 (224 aa).

G2 carries the N-myristoyl glycine lipid modification. The intramolecular interaction with C-terminus stretch occupies residues 2 to 113; sequence GLFGKTQEKP…LQKSTEVMKA (112 aa). The stretch at 22–54 forms a coiled coil; the sequence is KIRKEMRVVDRQIRDIQREEEKVKRSVKDAAKK. Important for autoinhibitory function stretches follow at residues 59–64 and 168–169; these read VCVVLA and IL. The stretch at 149 to 224 forms a coiled coil; it reads ESMDDQEEME…MQSRLATLRS (76 aa). Positions 151-222 are intramolecular interaction with N-terminus; sequence MDDQEEMEEA…EAMQSRLATL (72 aa). The segment at 151-224 is interaction with VPS4A; the sequence is MDDQEEMEEA…MQSRLATLRS (74 aa). Residue K179 forms a Glycyl lysine isopeptide (Lys-Gly) (interchain with G-Cter in ubiquitin) linkage. Residues 180–224 form a disordered region; it reads APSKVTDALPEPEPAGAMAASEEGEEEEDEEDLEAMQSRLATLRS. Interaction with STAMBP stretches follow at residues 196–224, 205–209, and 223–224; these read AMAA…TLRS, EEEDE, and RS. Phosphoserine is present on S200. An MIT-interacting motif motif is present at residues 201 to 213; it reads EEGEEEEDEEDLE. A compositionally biased stretch (acidic residues) spans 201 to 213; it reads EEGEEEEDEEDLE.

Belongs to the SNF7 family. In terms of assembly, probable core component of the endosomal sorting required for transport complex III (ESCRT-III). ESCRT-III components are thought to multimerize to form a flat lattice on the perimeter membrane of the endosome. Several assembly forms of ESCRT-III may exist that interact and act sequentially. Forms a metastable monomer in solution; its core structure (without part of the putative autoinhibitory C-terminal acidic region) oligomerizes into a flat lattice via two different dimerization interfaces. In vitro, heteromerizes with CHMP2A (but not CHMP4) to form helical tubular structures that expose membrane-interacting sites on the outside whereas VPS4B can associate on the inside of the tubule. May interact with IGFBP7; the relevance of such interaction however remains unclear. Interacts with CHMP2A. Interacts with CHMP4A; the interaction requires the release of CHMP4A autoinhibition. Interacts with VPS4A. Interacts with STAMBP; the interaction appears to relieve the autoinhibition of CHMP3. Interacts with VTA1. As to expression, expressed in lung, testis, heart, spleen, skeletal muscle, kidney, liver and brain.

Its subcellular location is the cytoplasm. The protein resides in the cytosol. The protein localises to the membrane. It is found in the endosome. It localises to the late endosome membrane. Its function is as follows. Probable core component of the endosomal sorting required for transport complex III (ESCRT-III) which is involved in multivesicular bodies (MVBs) formation and sorting of endosomal cargo proteins into MVBs. MVBs contain intraluminal vesicles (ILVs) that are generated by invagination and scission from the limiting membrane of the endosome and mostly are delivered to lysosomes enabling degradation of membrane proteins, such as stimulated growth factor receptors, lysosomal enzymes and lipids. The MVB pathway appears to require the sequential function of ESCRT-O, -I,-II and -III complexes. ESCRT-III proteins mostly dissociate from the invaginating membrane before the ILV is released. The ESCRT machinery also functions in topologically equivalent membrane fission events, such as the terminal stages of cytokinesis. ESCRT-III proteins are believed to mediate the necessary vesicle extrusion and/or membrane fission activities, possibly in conjunction with the AAA ATPase VPS4. Selectively binds to phosphatidylinositol 3,5-bisphosphate PtdIns(3,5)P2 and PtdIns(3,4)P2 in preference to other phosphoinositides tested. Involved in late stages of cytokinesis. Plays a role in endosomal sorting/trafficking of EGF receptor. The polypeptide is Charged multivesicular body protein 3 (Chmp3) (Mus musculus (Mouse)).